The sequence spans 183 residues: Gamma-crystallin N-A (183 aa).

Beta/gamma crystallin 'Greek key' domains lie at glycine 6 to serine 46, glycine 47 to lysine 89, tyrosine 95 to glycine 136, and glycine 138 to valine 180.

Belongs to the beta/gamma-crystallin family. As to quaternary structure, monomer.

Crystallins are the dominant structural components of the vertebrate eye lens. This chain is Gamma-crystallin N-A (crygna), found in Danio rerio (Zebrafish).